The following is a 334-amino-acid chain: Probable fructose-bisphosphate aldolase class 1 (334 aa).

Belongs to the class I fructose-bisphosphate aldolase family.

The catalysed reaction is beta-D-fructose 1,6-bisphosphate = D-glyceraldehyde 3-phosphate + dihydroxyacetone phosphate. Its pathway is carbohydrate degradation; glycolysis; D-glyceraldehyde 3-phosphate and glycerone phosphate from D-glucose: step 4/4. This is Probable fructose-bisphosphate aldolase class 1 from Xylella fastidiosa (strain Temecula1 / ATCC 700964).